A 129-amino-acid polypeptide reads, in one-letter code: Virion-associated protein (129 aa).

Coiled coils occupy residues 1 to 31 (MANLNQIQKEVSEILSDQKSMKSDIKAILEM) and 38 to 59 (IKESLEAVAAKIVNDLTKLIND). Residues 122–129 (PAGWPNQF) are capsid binding.

It belongs to the caulimovirus ORF III family. In terms of assembly, homotetramer, through coiled-coil domain. Homotrimer when interacts with icosehadral capsid. Interacts with capsid protein, and with Movement protein.

Its subcellular location is the virion. It is found in the host cell junction. It localises to the host plasmodesma. Functionally, plays a role in virus cell-to-cell and plant-to-plant transmission. Interacts with virion icosahedral capsid and movement protein, thereby facilitating virion cell-to-cell transmission through plasmodesmata opened by viral movement protein. Also interacts with aphid transmission factor, attaching the virion to aphid stylet when the animal feeds on an virus infected plant. Aphid saliva may later detach the virion, inducing release of infectious particles when the animal feeds on a new plant. This Arabidopsis thaliana (Mouse-ear cress) protein is Virion-associated protein.